A 187-amino-acid polypeptide reads, in one-letter code: UPF0301 protein PC1_3712 (187 aa).

It belongs to the UPF0301 (AlgH) family.

In Pectobacterium carotovorum subsp. carotovorum (strain PC1), this protein is UPF0301 protein PC1_3712.